A 2477-amino-acid chain; its full sequence is Non-reducing polyketide synthase mapC (2477 aa).

The segment at 14-269 (LLFGPQCSEI…HQQTHREGIQ (256 aa)) is N-terminal acylcarrier protein transacylase domain (SAT). Positions 403–820 (MPPIAITGMA…GSNAALIVRD (418 aa)) constitute a Ketosynthase family 3 (KS3) domain. Residues C568, H703, and H742 each act as for beta-ketoacyl synthase activity in the active site. The tract at residues 930–1233 (LCFGGQNGVT…HRVNLDGSDG (304 aa)) is malonyl-CoA:ACP transacylase (MAT) domain. Catalysis depends on S1017, which acts as the For acyl/malonyl transferase activity. An N-terminal hotdog fold region spans residues 1302–1435 (QERAGLLRKL…GSVSLCNERS (134 aa)). The PKS/mFAS DH domain maps to 1302–1612 (QERAGLLRKL…FMSVSIRSLT (311 aa)). The tract at residues 1307-1611 (LLRKLSDGPE…RFMSVSIRSL (305 aa)) is product template (PT) domain. Catalysis depends on H1336, which acts as the Proton acceptor; for dehydratase activity. Residues 1461-1612 (ASNGLKGSTV…FMSVSIRSLT (152 aa)) are C-terminal hotdog fold. D1518 functions as the Proton donor; for dehydratase activity in the catalytic mechanism. The Carrier domain occupies 1651–1725 (DSDLVAVQEM…GLTEHIFPGH (75 aa)). S1685 is subject to O-(pantetheine 4'-phosphoryl)serine. Residues 1882–2117 (PYALEHDLLQ…GFEWVGWTNN (236 aa)) form a methyltransferase (CMeT) domain region. Active-site for thioesterase activity residues include S2267 and D2421.

It localises to the cytoplasm. Its subcellular location is the cytosol. The catalysed reaction is 3 malonyl-CoA + acetyl-CoA + S-adenosyl-L-methionine + H(+) = 5-methylorsellinate + S-adenosyl-L-homocysteine + 3 CO2 + 4 CoA. The protein operates within secondary metabolite biosynthesis; terpenoid biosynthesis. Non-reducing polyketide synthase; part of the gene cluster that mediates the biosynthesis of mycophenolic acid (MPA), the first isolated antibiotic natural product in the world obtained from a culture of Penicillium brevicompactum in 1893. MpaC catalyzes the synthesis of 5-methylorsellinic acid (5MOA) via the condensation of 1 acetyl-CoA starter unit with 3 malonyl-CoA units and one methylation step. The first step of the pathway is the synthesis of 5-methylorsellinic acid (5MOA) by the cytosolic polyketide synthase mpaC. 5MOA is then converted to the phthalide compound 5,7-dihydroxy-4,6-dimethylphthalide (DHMP) by the endoplasmic reticulum-bound cytochrome P450 monooxygenase mpaDE. MpaDE first catalyzes hydroxylation of 5-MOA to 4,6-dihydroxy-2-(hydroxymethyl)-3-methylbenzoic acid (DHMB). MpaDE then acts as a lactone synthase that catalyzes the ring closure to convert DHMB into DHMP. The next step is the prenylation of DHMP by the Golgi apparatus-associated prenyltransferase mpaA to yield farnesyl-DHMP (FDHMP). The ER-bound oxygenase mpaB then mediates the oxidative cleavage the C19-C20 double bond in FDHMP to yield FDHMP-3C via a mycophenolic aldehyde intermediate. The O-methyltransferase mpaG catalyzes the methylation of FDHMP-3C to yield MFDHMP-3C. After the cytosolic methylation of FDHMP-3C, MFDHMP-3C enters into peroxisomes probably via free diffusion due to its low molecular weight. Upon a peroxisomal CoA ligation reaction, catalyzed by a beta-oxidation component enzyme acyl-CoA ligase ACL891, MFDHMP-3C-CoA would then be restricted to peroxisomes for the following beta-oxidation pathway steps. The peroxisomal beta-oxidation machinery than converts MFDHMP-3C-CoA into MPA_CoA, via a beta-oxidation chain-shortening process. Finally mpaH acts as a peroxisomal acyl-CoA hydrolase with high substrate specificity toward MPA-CoA to release the final product MPA. This is Non-reducing polyketide synthase mapC from Penicillium roqueforti (strain FM164).